We begin with the raw amino-acid sequence, 308 residues long: Cytochrome b (308 aa).

4 helical membrane-spanning segments follow: residues 1 to 21 (FGSL…LLAT), 45 to 66 (WLIR…YIHI), 81 to 101 (WNVG…GYVL), and 146 to 166 (FFAL…VHLT). The heme b site is built by histidine 51 and histidine 65. Residues histidine 150 and histidine 164 each coordinate heme b. An a ubiquinone-binding site is contributed by histidine 169. The next 3 membrane-spanning stretches (helical) occupy residues 194–214 (MKDI…ALFS), 256–276 (LGGV…PLLH), and 288–308 (LSQI…WVGS).

It belongs to the cytochrome b family. As to quaternary structure, the cytochrome bc1 complex contains 11 subunits: 3 respiratory subunits (MT-CYB, CYC1 and UQCRFS1), 2 core proteins (UQCRC1 and UQCRC2) and 6 low-molecular weight proteins (UQCRH/QCR6, UQCRB/QCR7, UQCRQ/QCR8, UQCR10/QCR9, UQCR11/QCR10 and a cleavage product of UQCRFS1). This cytochrome bc1 complex then forms a dimer. Requires heme b as cofactor.

The protein resides in the mitochondrion inner membrane. Functionally, component of the ubiquinol-cytochrome c reductase complex (complex III or cytochrome b-c1 complex) that is part of the mitochondrial respiratory chain. The b-c1 complex mediates electron transfer from ubiquinol to cytochrome c. Contributes to the generation of a proton gradient across the mitochondrial membrane that is then used for ATP synthesis. This chain is Cytochrome b (MT-CYB), found in Ptiloprora plumbea (Leaden honeyeater).